Consider the following 365-residue polypeptide: MALLLCFVLLCGVVDFARSLSITTPEEMIEKAKGETAYLPCKFTLSPEDQGPLDIEWLISPADNQKVDQVIILYSGDKIYDDYYPDLKGRVHFTSNDLKSGDASINVTNLQLSDIGTYQCKVKKAPGVANKKIHLVVLVKPSGARCYVDGSEEIGSDFKIKCEPKEGSLPLQYEWQKLSDSQKMPTSWLAEMTSSVISVKNASSEYSGTYSCTVRNRVGSDQCLLRLNVVPPSNKAGLIAGAIIGTLLALALIGLIIFCCRKKRREEKYEKEVHHDIREDVPPPKSRTSTARSYIGSNHSSLGSMSPSNMEGYSKTQYNQVPSEDFERTPQSPTLPPAKVAAPNLSRMGAIPVMIPAQSKDGSIV.

An N-terminal signal peptide occupies residues 1–19 (MALLLCFVLLCGVVDFARS). 2 Ig-like C2-type domains span residues 20–134 (LSIT…KKIH) and 141–228 (PSGA…LRLN). The Extracellular portion of the chain corresponds to 20–237 (LSITTPEEMI…NVVPPSNKAG (218 aa)). 2 disulfide bridges follow: Cys41–Cys120 and Cys162–Cys212. Asn106 and Asn201 each carry an N-linked (GlcNAc...) asparagine glycan. A helical membrane pass occupies residues 238–258 (LIAGAIIGTLLALALIGLIIF). S-palmitoyl cysteine attachment occurs at residues Cys259 and Cys260. The Cytoplasmic segment spans residues 259-365 (CCRKKRREEK…PAQSKDGSIV (107 aa)). The span at 269 to 282 (YEKEVHHDIREDVP) shows a compositional bias: basic and acidic residues. A disordered region spans residues 269-343 (YEKEVHHDIR…TLPPAKVAAP (75 aa)). Residues 286–322 (SRTSTARSYIGSNHSSLGSMSPSNMEGYSKTQYNQVP) show a composition bias toward polar residues. Ser297, Ser304, Ser306, Ser323, Ser332, and Ser363 each carry phosphoserine. The short motif at 360–365 (KDGSIV) is the PDZ-binding element.

As to quaternary structure, monomer. May form homodimer. Interacts with LNX, MAGI1, DLG4, PRKCABP, TJP1 and CTNNB1. Interacts with MPDZ; recruits MPDZ to intercellular contact sites. Interacts with JAML (homodimeric form). Secreted isoform 3, isoform 4 and isoform 5 can interact with the extracellular domain of the receptor. (Microbial infection) Interacts with adenovirus subgroups A, C, D, E and F fiber proteins as well as coxsackievirus B1, B2, B3, B4, B5 and B6 capsid proteins. In terms of processing, N-glycosylated. Palmitoylated on Cys-259 and/or Cys-260; required for proper localization to the plasma membrane. As to expression, expressed in pancreas, brain, heart, small intestine, testis, prostate and at a lower level in liver and lung. Isoform 5 is ubiquitously expressed. Isoform 3 is expressed in heart, lung and pancreas. In skeletal muscle, isoform 1 is found at the neuromuscular junction and isoform 2 is found in blood vessels. In cardiac muscle, isoform 1 and isoform 2 are found at intercalated disks. In heart expressed in subendothelial layers of the vessel wall but not in the luminal endothelial surface. Expression is elevated in hearts with dilated cardiomyopathy.

It is found in the cell membrane. Its subcellular location is the basolateral cell membrane. The protein localises to the cell junction. The protein resides in the tight junction. It localises to the adherens junction. It is found in the secreted. In terms of biological role, component of the epithelial apical junction complex that may function as a homophilic cell adhesion molecule and is essential for tight junction integrity. Also involved in transepithelial migration of leukocytes through adhesive interactions with JAML a transmembrane protein of the plasma membrane of leukocytes. The interaction between both receptors also mediates the activation of gamma-delta T-cells, a subpopulation of T-cells residing in epithelia and involved in tissue homeostasis and repair. Upon epithelial CXADR-binding, JAML induces downstream cell signaling events in gamma-delta T-cells through PI3-kinase and MAP kinases. It results in proliferation and production of cytokines and growth factors by T-cells that in turn stimulate epithelial tissues repair. Functionally, (Microbial infection) Acts as a receptor for adenovirus type C. (Microbial infection) Acts as a receptor for Coxsackievirus B1 to B6. This Homo sapiens (Human) protein is Coxsackievirus and adenovirus receptor (CXADR).